Consider the following 196-residue polypeptide: Carnitine operon protein CaiE (196 aa).

The interval T173–R196 is disordered. Positions Q187–R196 are enriched in polar residues.

This sequence belongs to the transferase hexapeptide repeat family.

It participates in amine and polyamine metabolism; carnitine metabolism. Functionally, overproduction of CaiE stimulates the activity of CaiB and CaiD. This chain is Carnitine operon protein CaiE, found in Escherichia coli O127:H6 (strain E2348/69 / EPEC).